The chain runs to 228 residues: Rab-like protein 2B (228 aa).

GTP-binding positions include 28–35 (GDSAVGKS), 76–80 (DTAGQ), and 133–136 (NKID). The tract at residues 200–228 (LEQEEEDVPDQEQSSSIETPSEEAASPHS) is disordered.

Belongs to the small GTPase superfamily. Rab family. As to quaternary structure, interacts (in its GTP-bound form) with CEP19 (via residues 121-150); this interaction is required for its localization to the mother centriole and cilium basal body. Interacts (in its GTP-bound form) with the intraflagellar transport (IFT) complex B (via the IFT74-IFT81 heterodimer). Binding to CEP19 and the IFT74-IFT81 heterodimer is mutually exclusive. As to expression, expressed in the testis.

It is found in the cytoplasm. The protein resides in the cytoskeleton. Its subcellular location is the microtubule organizing center. The protein localises to the centrosome. It localises to the centriole. It is found in the cilium basal body. Functionally, small GTPase required for ciliation. Activated in a guanine nucleotide exchange factor (GEF)-independent manner via its intrinsic GDP for GTP nucleotide exchange ability. Involved in ciliary assembly by binding the intraflagellar transport (IFT) complex B from the large pool pre-docked at the base of the cilium and thus triggers its entry into the cilia. The polypeptide is Rab-like protein 2B (RABL2B) (Homo sapiens (Human)).